The sequence spans 51 residues: MSDFTLDFAEGDAADTVSPQITSKSLCTPGCITGWMMCNTVTKGCSFTIGK.

The propeptide occupies 1–20; it reads MSDFTLDFAEGDAADTVSPQ. The lanthionine (Ser-Cys) cross-link spans 23 to 27; sequence SKSLC. 3 cross-links (beta-methyllanthionine (Thr-Cys)) span residues 28 to 31, 33 to 38, and 42 to 45; these read TPGC, TGWMMC, and TKGC.

It belongs to the type A lantibiotic family. Maturation of lantibiotics involves the enzymatic conversion of Thr, and Ser into dehydrated AA and the formation of thioether bonds with cysteine. This is followed by membrane translocation and cleavage of the modified precursor.

With respect to regulation, antimicrobial activity depends on the dehydration degree and integrity of flavucin. Functionally, lanthionine-containing peptide antibiotic (lantibiotic) active on certain Gram-positive bacteria. The bactericidal activity of lantibiotics is based on depolarization of energized bacterial cytoplasmic membranes, initiated by the formation of aqueous transmembrane pores. Flavucin has high antimicrobial activity against several pathogenic bacteria such as S.aureus, E.faecalis, E.faecium and L.monocytogenes. Is also active against the Gram-negative P.aeruginosa. The chain is Lantibiotic flavucin from Corynebacterium lipophiloflavum (strain ATCC 700352 / DSM 44291 / CCUG 37336 / JCM 10383 / DMMZ 1944).